Here is a 403-residue protein sequence, read N- to C-terminus: Tyrosine--tRNA ligase (403 aa).

A 'HIGH' region motif is present at residues 42-51 (PTAPDLHLGH). Positions 226–230 (KMSKS) match the 'KMSKS' region motif. K229 is a binding site for ATP. Positions 339-400 (LRLAGLLTAA…GKRNFARVLL (62 aa)) constitute an S4 RNA-binding domain.

This sequence belongs to the class-I aminoacyl-tRNA synthetase family. TyrS type 2 subfamily. As to quaternary structure, homodimer.

The protein localises to the cytoplasm. The catalysed reaction is tRNA(Tyr) + L-tyrosine + ATP = L-tyrosyl-tRNA(Tyr) + AMP + diphosphate + H(+). Functionally, catalyzes the attachment of tyrosine to tRNA(Tyr) in a two-step reaction: tyrosine is first activated by ATP to form Tyr-AMP and then transferred to the acceptor end of tRNA(Tyr). This chain is Tyrosine--tRNA ligase, found in Xanthomonas euvesicatoria pv. vesicatoria (strain 85-10) (Xanthomonas campestris pv. vesicatoria).